We begin with the raw amino-acid sequence, 226 residues long: Urease accessory protein UreE (226 aa).

A disordered region spans residues 192–226 (PHGSGLHIHSIHSHGDGHSHDHDHSHGDHDSDHKH). Positions 204-226 (SHGDGHSHDHDHSHGDHDSDHKH) are enriched in basic and acidic residues.

It belongs to the UreE family.

It is found in the cytoplasm. In terms of biological role, involved in urease metallocenter assembly. Binds nickel. Probably functions as a nickel donor during metallocenter assembly. The chain is Urease accessory protein UreE from Yersinia intermedia.